A 74-amino-acid chain; its full sequence is Cytochrome c oxidase assembly factor 5 (74 aa).

The 39-residue stretch at 27–65 (QSDCVLKEGKSPRQCLKEGNCKALKYSFFECKRSMLDAR) folds into the CHCH domain. Positions 30–41 (CVLKEGKSPRQC) match the Cx10C motif motif. 2 cysteine pairs are disulfide-bonded: C30/C57 and C41/C47. S37 is modified (phosphoserine). The Cx9C motif signature appears at 47-57 (CKALKYSFFEC).

Belongs to the PET191 family.

Involved in an early step of the mitochondrial complex IV assembly process. The protein is Cytochrome c oxidase assembly factor 5 (COA5) of Bos taurus (Bovine).